The following is a 438-amino-acid chain: MGSHEVELRPWQSLAAGLGFSSPDEEYWWTAFAQPLNQLMEWADYSIAEQYRVLAFLHRYVIPTCGPKPYRNGEQYWKTFMGFDHTPIQVSINFYNSKATVRTANIPICALSGSALDPINQKATADTLKAQKHLAPGNDLRWFEHFAKAFFLPNDEAHLINAKVSDRVLAMQGVQGMLSYDFPPNRTQTKVAMSPIWKHIETGRPIGDLMIQSIKDLGDEATGYMQSLQVLEEFIESEAAKDAGVSPAFFAFDTNLSENYKSSRIKIYLATPRTAFNRMVDIFTLGGRLNGPEMDRATQALRLLWSSVINVPEGLLDNDDIVPKNPHRCACVIFNFEIWPGASVPTPKIYLPAAYYGKPDLEIAEGMDVFFKSQGWNQPFHSYTDNYAKAFLRDQKVTCRHHDISFSYKGEGAYVTAYYKPELDAFADAATWVPEIYK.

Position 80–81 (80–81 (FM)) interacts with L-tryptophan. Residues Arg-102, Lys-190, Arg-264, Lys-266, Tyr-268, Tyr-350, Tyr-414, and Tyr-418 each contribute to the substrate site.

The protein belongs to the tryptophan dimethylallyltransferase family.

It functions in the pathway secondary metabolite biosynthesis. Its function is as follows. Indole diterpene prenyltransferase; part of the gene cluster that mediates the biosynthesis of the indole diterpenes janthitremanes such as shearinine K or shearinine A. The geranylgeranyl diphosphate (GGPP) synthase janG catalyzes the first step in janthitremane biosynthesis via conversion of farnesyl pyrophosphate and isopentyl pyrophosphate into geranylgeranyl pyrophosphate (GGPP). Condensation of indole-3-glycerol phosphate with GGPP by the prenyl transferase janC then forms 3-geranylgeranylindole (3-GGI). Epoxidation by the FAD-dependent monooxygenase janM leads to a epoxidized-GGI that is substrate of the terpene cyclase janB for cyclization to yield paspaline. Paspaline is subsequently converted to 13-desoxypaspaline by the cytochrome P450 monooxygenase janP, via beta-PC-M6 in a series of alpha-face oxidations. The cytochrome P450 monooxygenase janQ is proposed to carry out sequential beta-face oxidation steps at C-7 and C-13 of 13-desoxypaspaline to form paspalicine and paspalinine respectively. The indole diterpene prenyltransferase janD may then convert paspalinine into shearinine K which is substrate of janO and/or additional enzymes for oxidation and cyclization to generate shearinine A. In Penicillium janthinellum (Penicillium vitale), this protein is Indole diterpene prenyltransferase janD.